The following is a 203-amino-acid chain: Probable chemoreceptor glutamine deamidase CheD (203 aa).

Belongs to the CheD family.

The catalysed reaction is L-glutaminyl-[protein] + H2O = L-glutamyl-[protein] + NH4(+). Its function is as follows. Probably deamidates glutamine residues to glutamate on methyl-accepting chemotaxis receptors (MCPs), playing an important role in chemotaxis. The polypeptide is Probable chemoreceptor glutamine deamidase CheD (Janthinobacterium sp. (strain Marseille) (Minibacterium massiliensis)).